Consider the following 659-residue polypeptide: Sodium/nucleoside cotransporter 2 (659 aa).

The span at Met-1–Ala-10 shows a compositional bias: basic and acidic residues. Positions Met-1–Pro-22 are disordered. Ser-46 is subject to Phosphoserine. 14 helical membrane-spanning segments follow: residues Ile-81–Asn-101, Ala-105–Leu-124, Lys-149–Asp-167, Glu-173–Lys-193, Arg-201–Glu-221, Ile-234–Val-254, Gln-261–Leu-281, Thr-296–Met-315, Val-337–Phe-356, Leu-363–Tyr-382, Val-424–Trp-444, Thr-455–Trp-475, Ala-530–Leu-550, and Ala-568–Val-588.

This sequence belongs to the concentrative nucleoside transporter (CNT) (TC 2.A.41) family. As to expression, expressed in liver (in bile canalicular membrane vesicles (CMV) but not in sinusoidal vesicles), jejunum, spleen and heart. Also expressed in brain and skeletal muscle. Not expressed in kidney, muscle and lung.

The protein localises to the membrane. It localises to the apicolateral cell membrane. It carries out the reaction adenosine(out) + Na(+)(out) = adenosine(in) + Na(+)(in). It catalyses the reaction inosine(out) + Na(+)(out) = inosine(in) + Na(+)(in). The enzyme catalyses guanosine(out) + Na(+)(out) = guanosine(in) + Na(+)(in). The catalysed reaction is uridine(out) + Na(+)(out) = uridine(in) + Na(+)(in). Its activity is regulated as follows. Inhibited by formycin B, partially inhibited by purine analog ara-A. Sodium-dependent and purine-selective. Exhibits the transport characteristics of the nucleoside transport system cif or N1 subtype (N1/cif) (selective for purine nucleosides and uridine). Accepts purine, analogs of purine nucleosides and uridine, and exhibits high affinity for adenosine. May contribute to regulate the transport of organic compounds in testes across the blood-testis-barrier. This is Sodium/nucleoside cotransporter 2 (Slc28a2) from Rattus norvegicus (Rat).